The chain runs to 475 residues: BICD family-like cargo adapter 2 (475 aa).

A coiled-coil region spans residues 56-275 (ELGKALLERN…LKELQDELHM (220 aa)). Composition is skewed to polar residues over residues 286–300 (HSSL…TAVQ) and 308–318 (SAETQSITSGY). The interval 286–318 (HSSLHSEIQQSTAVQNHEKGRNSAETQSITSGY) is disordered. Residues 340 to 413 (RLQDQVTMQH…ESLNLQLLST (74 aa)) are a coiled coil. The span at 440–450 (QSQKQQETQKP) shows a compositional bias: low complexity. Positions 440–459 (QSQKQQETQKPPESPQNSFL) are disordered.

It belongs to the BICDR family.

This is BICD family-like cargo adapter 2 (bicdl2) from Xenopus tropicalis (Western clawed frog).